The chain runs to 73 residues: Large ribosomal subunit protein bL31 (73 aa).

This sequence belongs to the bacterial ribosomal protein bL31 family. Type A subfamily. In terms of assembly, part of the 50S ribosomal subunit.

In terms of biological role, binds the 23S rRNA. This Brucella abortus (strain 2308) protein is Large ribosomal subunit protein bL31.